The following is a 307-amino-acid chain: N-myc-interactor (307 aa).

Positions 1–24 are disordered; sequence MEADKDDTQQILKEHSPDEFIKDE. Ser-16 carries the post-translational modification Phosphoserine. Lys-22 participates in a covalent cross-link: Glycyl lysine isopeptide (Lys-Gly) (interchain with G-Cter in ubiquitin). The stretch at 30–64 forms a coiled coil; it reads IDEITKKNIQLKKEIQKLETELQEATKEFQIKEDI. NID domains lie at 103 to 192 and 201 to 292; these read GQAL…GEVD and GSAV…EVDV.

It belongs to the NMI family. As to quaternary structure, interacts with MYCN and MYC, as well as with other transcription factors with a Zip, HLH or a HLH-Zip motif. Interacts with all STAT proteins except STAT2. Interacts with IRF7, the interaction is direct and leads to the inhibition of IRF7-mediated type I IFN production. Interacts (via coiled-coil domain) with TRIM21 (via the SPRY domain); the interaction leads to 'Lys-63'-linked ubiquitination of NMI. Interacts with IFI35; the interaction is direct and is facilitated by TRIM21. Interacts with TLR4; the interaction is direct and leads to NF-kappa-B activation. In terms of assembly, (Microbial infection) Interacts with human cytomegalovirus protein UL23; this interaction inhibits NMI-mediated transcription of interferon-gamma stimulated genes. In terms of processing, ubiquitinated. 'Lys-63'-linked ubiquitination by TRIM21 promotes interaction with IFI35 and inhibits virus-triggered type I IFN-beta production. In terms of tissue distribution, expressed in adult spleen, liver, and kidney. Expressed in fetal thymus, liver, placenta, spleen, lung, and kidney but not brain. Expressed in macrophages.

It localises to the cytoplasm. The protein localises to the nucleus. It is found in the secreted. Functionally, acts as a signaling pathway regulator involved in innate immune system response. In response to interleukin 2/IL2 and interferon IFN-gamma/IFNG, interacts with signal transducer and activator of transcription/STAT which activate the transcription of downstream genes involved in a multitude of signals for development and homeostasis. Enhances the recruitment of CBP/p300 coactivators to STAT1 and STAT5, resulting in increased STAT1- and STAT5-dependent transcription. In response to interferon IFN-alpha, associates in a complex with signaling pathway regulator IFI35 to regulate immune response; the complex formation prevents proteasome-mediated degradation of IFI35. In complex with IFI35, inhibits virus-triggered type I IFN-beta production when ubiquitinated by ubiquitin-protein ligase TRIM21. In complex with IFI35, negatively regulates nuclear factor NF-kappa-B signaling by inhibiting the nuclear translocation, activation and transcription of NF-kappa-B subunit p65/RELA, resulting in the inhibition of endothelial cell proliferation, migration and re-endothelialization of injured arteries. Negatively regulates virus-triggered type I interferon/IFN production by inducing proteosome-dependent degradation of IRF7, a transcriptional regulator of type I IFN, thereby interfering with cellular antiviral responses. Beside its role as an intracellular signaling pathway regulator, also functions extracellularly as damage-associated molecular patterns (DAMPs) to promote inflammation, when actively released by macrophage to the extracellular space during cell injury or pathogen invasion. Macrophage-secreted NMI activates NF-kappa-B signaling in adjacent macrophages through Toll-like receptor 4/TLR4 binding and activation, thereby inducing NF-kappa-B translocation from the cytoplasm into the nucleus which promotes the release of pro-inflammatory cytokines. This is N-myc-interactor from Homo sapiens (Human).